Here is a 100-residue protein sequence, read N- to C-terminus: Cell division protein DrpB (100 aa).

Residues Met-1–Pro-16 are Cytoplasmic-facing. The helical transmembrane segment at Gly-17–Ala-37 threads the bilayer. At Arg-38–Lys-64 the chain is on the periplasmic side. The chain crosses the membrane as a helical span at residues Trp-65–Ile-85. Residues Ala-86–Glu-100 are Cytoplasmic-facing.

Belongs to the DrpB family. Bacterial adenylate cyclase hybrid (BACTH) studies show interaction of this protein with DamX, FtsI, FtsN, FtsQ, YmgF, DedD, FtsA and MalF, as well as weaker interactions with DedD, MalG and PBP2, but this assay often generates false positive results.

It localises to the cell inner membrane. In terms of biological role, a non-essential division protein that localizes to the septal ring in low ionic strength medium. Functionally, localizes to the septal ring in about 30% of observed cells before cell constriction occurs; localization occurs in low ionic strength medium (0 NaCl) and requires FtsZ but not FtsEX. Overexpression partially restores correct FtsI localization to the division septum in an ftsEX deletion. Isolated as a multicopy suppressor of an ftsEX deletion mutant; it does not suppress other cell division defects (e.g. ftsA, ftsI, ftsQ or ftsZ). The chain is Cell division protein DrpB from Escherichia coli (strain K12).